Here is a 197-residue protein sequence, read N- to C-terminus: Probable GTP-binding protein EngB (197 aa).

In terms of domain architecture, EngB-type G spans 24 to 197 (DIPEIALAGR…WDAILEKVNK (174 aa)). GTP-binding positions include 32–39 (GRSNVGKS), 59–63 (GKTQL), 77–80 (DVPG), 144–147 (TKAD), and 176–178 (FSS). Mg(2+) contacts are provided by Ser-39 and Thr-61.

Belongs to the TRAFAC class TrmE-Era-EngA-EngB-Septin-like GTPase superfamily. EngB GTPase family. Requires Mg(2+) as cofactor.

Its function is as follows. Necessary for normal cell division and for the maintenance of normal septation. In Streptococcus gordonii (strain Challis / ATCC 35105 / BCRC 15272 / CH1 / DL1 / V288), this protein is Probable GTP-binding protein EngB.